The following is a 320-amino-acid chain: Putative FBD-associated F-box protein At3g60710 (320 aa).

Residues 2–48 form the F-box domain; sequence EDLISQLPNELLQEILLNLPTSESVRTSVLPTRWRNLWQSVPGLYLI. Residues 212 to 268 enclose the FBD domain; sequence MEEIASSPVPKCLQTSIENVKIKMTPKADQEKSRKAETEVANYILENATLLKLTLWL.

In Arabidopsis thaliana (Mouse-ear cress), this protein is Putative FBD-associated F-box protein At3g60710.